A 151-amino-acid chain; its full sequence is Large ribosomal subunit protein bL9 (151 aa).

This sequence belongs to the bacterial ribosomal protein bL9 family.

Binds to the 23S rRNA. The protein is Large ribosomal subunit protein bL9 of Lactobacillus delbrueckii subsp. bulgaricus (strain ATCC 11842 / DSM 20081 / BCRC 10696 / JCM 1002 / NBRC 13953 / NCIMB 11778 / NCTC 12712 / WDCM 00102 / Lb 14).